The sequence spans 622 residues: MSTDNKQSLPAITLAAIGVVYGDIGTSPLYTLRECLSGQFGFGVERDAVFGFLSLIFWLLIFVVSIKYLTFVMRADNAGEGGILTLMSLAGRNTSARTTSMLVIMGLIGGSFFYGEVVITPAISVMSAIEGLEIVAPQLDTWIVPLSIIVLTLLFMIQKHGTAMVGKLFAPIMLTWFLILAGLGLRSIIANPEVLHALNPMWAVHFFLEYKTVSFIALGAVVLSITGVEALYADMGHFGKFPIRLAWFTVVLPSLTLNYFGQGALLLKNPEAIKNPFFLLAPDWALIPLLIIAALATVIASQAVISGVFSLTRQAVRLGYLSPMRIIHTSEMESGQIYIPFVNWMLYVAVVIVIVSFEHSSNLAAAYGIAVTGTMVLTSILSTTVARQNWHWNKYFVALILIAFLCVDIPLFTANLDKLLSGGWLPLSLGTVMFIVMTTWKSERFRLLRRMHEHGNSLEAMIASLEKSPPVRVPGTAVYMSRAINVIPFALMHNLKHNKVLHERVILLTLRTEDAPYVHNVRRVQIEQLSLTFWRVVASYGWRETPNVEEVFHRCGLEGLSCRMMETSFFMSHESLILGKRPWYLRLRGKLYLLLQRNALRAPDQFEIPPNRVIELGTQVEI.

12 helical membrane-spanning segments follow: residues 9–29, 49–69, 103–123, 137–157, 165–185, 213–233, 247–267, 276–296, 337–357, 363–383, 396–416, and 419–439; these read LPAI…TSPL, VFGF…IKYL, VIMG…TPAI, PQLD…LFMI, VGKL…GLGL, VSFI…ALYA, WFTV…ALLL, PFFL…AALA, IYIP…IVSF, LAAA…ILST, FVAL…TANL, and LLSG…VMTT.

The protein belongs to the HAK/KUP transporter (TC 2.A.72) family.

The protein resides in the cell inner membrane. It catalyses the reaction K(+)(in) + H(+)(in) = K(+)(out) + H(+)(out). Responsible for the low-affinity transport of potassium into the cell. Likely operates as a K(+):H(+) symporter. The chain is Low affinity potassium transport system protein Kup from Shigella boydii serotype 18 (strain CDC 3083-94 / BS512).